The sequence spans 92 residues: Putative transition state regulator Abh (92 aa).

Residues 5-50 (GVVRKVDELGRIVMPIELRRALDIAIKDSIEFFVDGDKIILKKYKP) enclose the SpoVT-AbrB domain.

To B.subtilis AbrB and SpoVT.

This chain is Putative transition state regulator Abh (abh), found in Bacillus subtilis (strain 168).